A 501-amino-acid polypeptide reads, in one-letter code: Cytochrome P450 3A31 (501 aa).

Cys-440 contacts heme.

This sequence belongs to the cytochrome P450 family. Requires heme as cofactor. Expressed constitutively in liver.

The protein resides in the endoplasmic reticulum membrane. Its subcellular location is the microsome membrane. It carries out the reaction an organic molecule + reduced [NADPH--hemoprotein reductase] + O2 = an alcohol + oxidized [NADPH--hemoprotein reductase] + H2O + H(+). Its function is as follows. Cytochromes P450 are a group of heme-thiolate monooxygenases. In liver microsomes, this enzyme is involved in an NADPH-dependent electron transport pathway. It oxidizes a variety of structurally unrelated compounds, including steroids, fatty acids, and xenobiotics. This Mesocricetus auratus (Golden hamster) protein is Cytochrome P450 3A31 (CYP3A31).